A 114-amino-acid polypeptide reads, in one-letter code: ATP synthase subunit c (114 aa).

Transmembrane regions (helical) follow at residues 31–51 (AVFY…AAGG) and 88–108 (IETF…TGIF).

The protein belongs to the ATPase C chain family. As to quaternary structure, F-type ATPases have 2 components, F(1) - the catalytic core - and F(0) - the membrane proton channel. F(1) has five subunits: alpha(3), beta(3), gamma(1), delta(1), epsilon(1). F(0) has three main subunits: a(1), b(2) and c(10-14). The alpha and beta chains form an alternating ring which encloses part of the gamma chain. F(1) is attached to F(0) by a central stalk formed by the gamma and epsilon chains, while a peripheral stalk is formed by the delta and b chains.

The protein localises to the cell inner membrane. Its function is as follows. F(1)F(0) ATP synthase produces ATP from ADP in the presence of a proton or sodium gradient. F-type ATPases consist of two structural domains, F(1) containing the extramembraneous catalytic core and F(0) containing the membrane proton channel, linked together by a central stalk and a peripheral stalk. During catalysis, ATP synthesis in the catalytic domain of F(1) is coupled via a rotary mechanism of the central stalk subunits to proton translocation. Key component of the F(0) channel; it plays a direct role in translocation across the membrane. A homomeric c-ring of between 10-14 subunits forms the central stalk rotor element with the F(1) delta and epsilon subunits. The protein is ATP synthase subunit c of Sulfurihydrogenibium sp. (strain YO3AOP1).